Reading from the N-terminus, the 245-residue chain is Gem-associated protein 2 (245 aa).

Belongs to the gemin-2 family. In terms of assembly, component of the core survival motor neuron (SMN) complex composed of Smn, Gem2, Gem3, rig/Gem5 and one of 3 almost identical Gem4 paralogs encoded by Glos/Gem4a, Gem4b or Gem4c. Part of a minimal SMN complex composed of Smn and Gem2 only; this complex is active in UsnRNP assembly. The SMN complex associates with the entire set of spliceosomal snRNP Sm proteins, SmB, SmD1, SmD2, SmD3, SmE, SmF and SmG, and with the snRNP-specific proteins snRNP-U1-70K, U2A, snf/U1A and U5-116KD. As to expression, expressed in nurse cells and oocytes.

The protein resides in the cytoplasm. Its subcellular location is the U-body. Functionally, component of the survival motor neuron (SMN) complex that catalyzes the assembly of small nuclear ribonucleoproteins (snRNPs), the building blocks of the spliceosome, and thereby plays an important role in the splicing of cellular pre-mRNAs. Most spliceosomal snRNPs contain a common set of Sm proteins SNRPB, SNRPD1, SNRPD2, SNRPD3, SNRPE, SNRPF and SNRPG that assemble in a heptameric protein ring on the Sm site of the small nuclear RNA to form the core snRNP (Sm core). In the cytosol, the Sm proteins SNRPD1, SNRPD2, SNRPE, SNRPF and SNRPG (5Sm) are trapped in an inactive 6S pICln-Sm complex by the chaperone CLNS1A that controls the assembly of the core snRNP. To assemble core snRNPs, the SMN complex accepts the trapped 5Sm proteins from CLNS1A. Binding of snRNA inside 5Sm ultimately triggers eviction of the SMN complex, thereby allowing binding of SNRPD3 and SNRPB to complete assembly of the core snRNP. Within the SMN complex, GEMIN2 constrains the conformation of 5Sm, thereby promoting 5Sm binding to snRNA containing the snRNP code (a nonameric Sm site and a 3'-adjacent stem-loop), thus preventing progression of assembly until a cognate substrate is bound. Involved in adult motor function. This Drosophila melanogaster (Fruit fly) protein is Gem-associated protein 2.